The chain runs to 259 residues: 3-oxo-5-alpha-steroid 4-dehydrogenase 1 (259 aa).

5 helical membrane-spanning segments follow: residues Leu-10–Gly-30, Val-86–Ile-106, Pro-111–Gln-131, Val-146–Ile-166, and Trp-206–Leu-226.

The protein belongs to the steroid 5-alpha reductase family. Liver and prostate (at a low level).

The protein localises to the microsome membrane. It localises to the endoplasmic reticulum membrane. The catalysed reaction is a 3-oxo-5alpha-steroid + NADP(+) = a 3-oxo-Delta(4)-steroid + NADPH + H(+). It carries out the reaction 5alpha-pregnane-3,20-dione + NADP(+) = progesterone + NADPH + H(+). It catalyses the reaction 17beta-hydroxy-5alpha-androstan-3-one + NADP(+) = testosterone + NADPH + H(+). The enzyme catalyses androst-4-ene-3,17-dione + NADPH + H(+) = 5alpha-androstan-3,17-dione + NADP(+). Its function is as follows. Converts testosterone into 5-alpha-dihydrotestosterone and progesterone or corticosterone into their corresponding 5-alpha-3-oxosteroids. It plays a central role in sexual differentiation and androgen physiology. In Rattus norvegicus (Rat), this protein is 3-oxo-5-alpha-steroid 4-dehydrogenase 1.